Reading from the N-terminus, the 491-residue chain is Regulatory protein NPR5 (491 aa).

The BTB domain occupies 26–116 (SDVTFSVEGR…LYSGQVSIVP (91 aa)). A C2HC NPR-type zinc finger spans residues 122-136 (RPNCGERGCWHTHCS). Residues cysteine 125, cysteine 130, histidine 132, and cysteine 135 each contribute to the Zn(2+) site. ANK repeat units follow at residues 254–283 (QKIR…LNLD), 284–313 (ESLA…DVNY), 318–347 (AGKT…DPNV), and 351–385 (GGIT…KLRL). The disordered stretch occupies residues 400–491 (EEGNNSNNQN…MYHHHHQHHF (92 aa)). The span at 403–413 (NNSNNQNNDNN) shows a compositional bias: low complexity. Over residues 457–470 (DQGDDHNSQREGMS) the composition is skewed to basic and acidic residues.

This sequence belongs to the plant 'ANKYRIN-BTB/POZ' family. 'NOOT-BOP-COCH-like' (NBCL) subfamily. As to quaternary structure, homodimer or heterodimer with BOP1. Interacts with PAN. Highly expressed in young floral meristem. Predominantly expressed in the boundary between floral meristem (FM) and sepal primordia.

It localises to the cytoplasm. Its subcellular location is the nucleus. Its pathway is protein modification; protein ubiquitination. Its function is as follows. May act as a substrate-specific adapter of an E3 ubiquitin-protein ligase complex (CUL3-RBX1-BTB) which mediates the ubiquitination and subsequent proteasomal degradation of target proteins. Acts redundantly with BOP2. BOP1/2 promote leaf and floral meristem fate and determinacy in a pathway targeting AP1 and AGL24. BOP1/2 act as transcriptional co-regulators through direct interaction with TGA factors, including PAN, a direct regulator of AP1. Controls lateral organ fate through positive regulation of adaxial-abaxial polarity genes ATHB-14/PHB, YAB1/FIL and YAB3, and through positive regulation of LOB domain-containing genes LOB, LBD6/AS2 and LBD36. Promotes and maintains a developmentally determinate state in leaf cells through the negative regulation of JAG, JGL and class I KNOX genes. Is also involved in nectary development, formation of normal abscission zones (AZs) and suppression of bract formation, probably by regulating the cell wall disorganization. The sequence is that of Regulatory protein NPR5 from Arabidopsis thaliana (Mouse-ear cress).